A 166-amino-acid chain; its full sequence is Peptidyl-prolyl cis-trans isomerase cyp18 (166 aa).

In terms of domain architecture, PPIase cyclophilin-type spans 2–164; that stretch reads STVELNTSAG…QPVVIESAKI (163 aa).

Belongs to the cyclophilin-type PPIase family. In terms of assembly, monomer.

Its subcellular location is the cytoplasm. It catalyses the reaction [protein]-peptidylproline (omega=180) = [protein]-peptidylproline (omega=0). Its activity is regulated as follows. Inhibition by cyclosporin A with a Ki of 21 mu-mol. Its function is as follows. PPIases accelerate the folding of proteins. It catalyzes the cis-trans isomerization of proline imidic peptide bonds in oligopeptides. The polypeptide is Peptidyl-prolyl cis-trans isomerase cyp18 (Streptomyces antibioticus).